Reading from the N-terminus, the 283-residue chain is D-alanine aminotransferase (283 aa).

Tyr-32 provides a ligand contact to substrate. Pyridoxal 5'-phosphate is bound at residue Arg-51. The substrate site is built by Arg-99 and His-101. Residue Lys-146 is the Proton acceptor of the active site. N6-(pyridoxal phosphate)lysine is present on Lys-146. Residue Glu-178 coordinates pyridoxal 5'-phosphate.

The protein belongs to the class-IV pyridoxal-phosphate-dependent aminotransferase family. In terms of assembly, homodimer. Requires pyridoxal 5'-phosphate as cofactor.

The catalysed reaction is D-alanine + 2-oxoglutarate = D-glutamate + pyruvate. Its function is as follows. Acts on the D-isomers of alanine, leucine, aspartate, glutamate, aminobutyrate, norvaline and asparagine. The enzyme transfers an amino group from a substrate D-amino acid to the pyridoxal phosphate cofactor to form pyridoxamine and an alpha-keto acid in the first half-reaction. The second half-reaction is the reverse of the first, transferring the amino group from the pyridoxamine to a second alpha-keto acid to form the product D-amino acid via a ping-pong mechanism. This is an important process in the formation of D-alanine and D-glutamate, which are essential bacterial cell wall components. This is D-alanine aminotransferase (dat) from Lysinibacillus sphaericus (Bacillus sphaericus).